We begin with the raw amino-acid sequence, 99 residues long: Protein AC4 (99 aa).

Belongs to the geminiviridae protein AC4/C4 family.

Pathogenicity determinant. May act as a suppressor of RNA-mediated gene silencing, also known as post-transcriptional gene silencing (PTGS), a mechanism of plant viral defense that limits the accumulation of viral RNAs. This is Protein AC4 from Glycine max (Soybean).